The primary structure comprises 169 residues: Lipoprotein signal peptidase (169 aa).

Helical transmembrane passes span 59-79 and 84-104; these read PTVL…YVIW and TTLF…NMID. Catalysis depends on residues D113 and D139. Residues 132–152 form a helical membrane-spanning segment; that stretch reads WPIFNIADSAITIGACMLMIF.

The protein belongs to the peptidase A8 family.

The protein localises to the cell inner membrane. It carries out the reaction Release of signal peptides from bacterial membrane prolipoproteins. Hydrolyzes -Xaa-Yaa-Zaa-|-(S,diacylglyceryl)Cys-, in which Xaa is hydrophobic (preferably Leu), and Yaa (Ala or Ser) and Zaa (Gly or Ala) have small, neutral side chains.. It participates in protein modification; lipoprotein biosynthesis (signal peptide cleavage). This protein specifically catalyzes the removal of signal peptides from prolipoproteins. The polypeptide is Lipoprotein signal peptidase (Pelodictyon phaeoclathratiforme (strain DSM 5477 / BU-1)).